Consider the following 321-residue polypeptide: MIHARIAGTGSYLPGNPVSNDDLVARGIDTSDDWVVSRTGIRTRYLAPPDVGSSDLALVAAQRAIEAAGCAANDIDLIIVATSTPDYIFPSTATLLQSKLGIGNNGAAFDVQAVCSGFVYALSIAEKFIRSGSHKRALVVGAEVFSRILDWTDRATCVLFGDGAGAVVLEASERPGVLTTALHADGSHHPILCVPGNVATGQVVGDPFLRMDGQAVFKFAVKVLGDVAHEVLDAAGVAADSVDWLIPHQANIRIIQATAKRLGLSMEKVVATVDRHGNTSAASIPLALDLAVRDGRIRPGQRVVVEGVGGGFTWGAALIDF.

Catalysis depends on residues Cys115 and His248. An ACP-binding region spans residues 249-253; the sequence is QANIR. Residue Asn278 is part of the active site.

The protein belongs to the thiolase-like superfamily. FabH family. Homodimer.

Its subcellular location is the cytoplasm. The enzyme catalyses malonyl-[ACP] + acetyl-CoA + H(+) = 3-oxobutanoyl-[ACP] + CO2 + CoA. The protein operates within lipid metabolism; fatty acid biosynthesis. Functionally, catalyzes the condensation reaction of fatty acid synthesis by the addition to an acyl acceptor of two carbons from malonyl-ACP. Catalyzes the first condensation reaction which initiates fatty acid synthesis and may therefore play a role in governing the total rate of fatty acid production. Possesses both acetoacetyl-ACP synthase and acetyl transacylase activities. Its substrate specificity determines the biosynthesis of branched-chain and/or straight-chain of fatty acids. This Azoarcus sp. (strain BH72) protein is Beta-ketoacyl-[acyl-carrier-protein] synthase III.